The following is a 116-amino-acid chain: Dynein light chain Tctex-type 3 (116 aa).

A 3'-nitrotyrosine modification is found at Tyr4.

This sequence belongs to the dynein light chain Tctex-type family. Homodimer. The cytoplasmic dynein 1 complex consists of two catalytic heavy chains (HCs) and a number of non-catalytic subunits presented by intermediate chains (ICs), light intermediate chains (LICs) and light chains (LCs); the composition seems to vary in respect to the IC, LIC and LC composition. The heavy chain homodimer serves as a scaffold for the probable homodimeric assembly of the respective non-catalytic subunits. The ICs and LICs bind directly to the HC dimer and the LCs assemble on the IC dimer. DYNLT1 and DYNLT3 compete for association with dynein IC (DYNC1I1 or DYNC1I2). Self-associates. Interacts with DYNC1I1 and DYNC1I2. Interacts with BUB3. Interacts with SATB1 in nucleus to form complex with matrix attachment regions (MARs) of DNA.

It localises to the nucleus. The protein localises to the cytoplasm. It is found in the cytoskeleton. Its subcellular location is the chromosome. The protein resides in the centromere. It localises to the kinetochore. Functionally, acts as one of several non-catalytic accessory components of the cytoplasmic dynein 1 complex that are thought to be involved in linking dynein to cargos and to adapter proteins that regulate dynein function. Cytoplasmic dynein 1 acts as a motor for the intracellular retrograde motility of vesicles and organelles along microtubules. Probably binds BUB3 as part of transport cargo. Required for the efficient progression through mitosis. The chain is Dynein light chain Tctex-type 3 (DYNLT3) from Homo sapiens (Human).